The primary structure comprises 131 residues: Small ribosomal subunit protein uS8 (131 aa).

It belongs to the universal ribosomal protein uS8 family. In terms of assembly, part of the 30S ribosomal subunit. Contacts proteins S5 and S12.

In terms of biological role, one of the primary rRNA binding proteins, it binds directly to 16S rRNA central domain where it helps coordinate assembly of the platform of the 30S subunit. This chain is Small ribosomal subunit protein uS8, found in Sulfurimonas denitrificans (strain ATCC 33889 / DSM 1251) (Thiomicrospira denitrificans (strain ATCC 33889 / DSM 1251)).